Reading from the N-terminus, the 157-residue chain is Holo-[acyl-carrier-protein] synthase (157 aa).

Positions 8 and 59 each coordinate Mg(2+).

The protein belongs to the P-Pant transferase superfamily. AcpS family. Mg(2+) is required as a cofactor.

It is found in the cytoplasm. The enzyme catalyses apo-[ACP] + CoA = holo-[ACP] + adenosine 3',5'-bisphosphate + H(+). Transfers the 4'-phosphopantetheine moiety from coenzyme A to a Ser of acyl-carrier-protein. In Gluconobacter oxydans (strain 621H) (Gluconobacter suboxydans), this protein is Holo-[acyl-carrier-protein] synthase.